Reading from the N-terminus, the 280-residue chain is Undecaprenyl-diphosphatase (280 aa).

8 helical membrane passes run 1 to 21 (MTILQAIVLAIVEGLTEFLPV), 41 to 61 (FVRAFTVMIQFGAILSVLVLY), 87 to 107 (FDLYWKLLIALVPAVILGFLF), 115 to 135 (LGSVWVVAVVLFLGGIFMLFV), 147 to 167 (ITYPKAFVIGLFQCLAIFLPG), 186 to 206 (KAAAEFSFFLAVPTMLGATLL), 225 to 245 (IVLLVGNIVAFIVALAAIKFF), and 260 to 280 (YRILVGGLLIVLMLSGVSLAV).

This sequence belongs to the UppP family.

It is found in the cell inner membrane. The catalysed reaction is di-trans,octa-cis-undecaprenyl diphosphate + H2O = di-trans,octa-cis-undecaprenyl phosphate + phosphate + H(+). Catalyzes the dephosphorylation of undecaprenyl diphosphate (UPP). Confers resistance to bacitracin. This Porphyromonas gingivalis (strain ATCC 33277 / DSM 20709 / CIP 103683 / JCM 12257 / NCTC 11834 / 2561) protein is Undecaprenyl-diphosphatase.